Here is a 150-residue protein sequence, read N- to C-terminus: uncharacterized protein (150 aa).

Residues Met-1–Ala-23 form the signal peptide.

This sequence belongs to the asfivirus EP152R family.

It localises to the virion. This is an uncharacterized protein from African swine fever virus (isolate Warthog/Namibia/Wart80/1980) (ASFV).